We begin with the raw amino-acid sequence, 160 residues long: MVPKLFTSQICLLLLLGLMGVEGSLHARPPQFTKAQWFAIQHINVNPPRCTIAMRVINNYQRRCKNQNTFLRTTFAYTANVCRNERIRCPRNRTLHNCHRSRYRVPLLHCDLINPGAQNISTCRYADRPGRRFYVVACESRDPRDSPRYPVVPVHLDTTI.

The signal sequence occupies residues 1 to 27 (MVPKLFTSQICLLLLLGLMGVEGSLHA). Residues 28-72 (RPPQFTKAQWFAIQHINVNPPRCTIAMRVINNYQRRCKNQNTFLR) are required for nearly all of the bactericidal activities; partially involved in LPS-binding. His-42 functions as the Proton acceptor in the catalytic mechanism. Intrachain disulfides connect Cys-50/Cys-110, Cys-64/Cys-123, Cys-82/Cys-138, and Cys-89/Cys-98. At Tyr-60 the chain carries 3'-nitrotyrosine. 65-69 (KNQNT) lines the substrate pocket. Residues Asn-92 and Asn-119 are each glycosylated (N-linked (GlcNAc...) asparagine). Residue His-155 is the Proton donor of the active site.

This sequence belongs to the pancreatic ribonuclease family. Interacts with bacterial lipopolysaccharide (LPS) and lipoteichoic acid (LTA). In vitro interacts with phospholipid bilayers.

The protein resides in the secreted. Cytotoxin and helminthotoxin with low-efficiency ribonuclease activity. Possesses a wide variety of biological activities. Exhibits antibacterial activity. The polypeptide is Eosinophil cationic protein (RNASE3) (Macaca fascicularis (Crab-eating macaque)).